The chain runs to 149 residues: Ribonuclease HI (149 aa).

One can recognise an RNase H type-1 domain in the interval 1–142; the sequence is MTPKVTIYTD…ADALANEGLR (142 aa). Asp-10, Glu-48, Asp-70, and Asp-134 together coordinate Mg(2+).

This sequence belongs to the RNase H family. Monomer. Mg(2+) serves as cofactor.

Its subcellular location is the cytoplasm. The catalysed reaction is Endonucleolytic cleavage to 5'-phosphomonoester.. Its function is as follows. Endonuclease that specifically degrades the RNA of RNA-DNA hybrids. This Caulobacter vibrioides (strain ATCC 19089 / CIP 103742 / CB 15) (Caulobacter crescentus) protein is Ribonuclease HI.